Here is a 196-residue protein sequence, read N- to C-terminus: Probable thymidylate kinase (196 aa).

Residue 7 to 14 (GIDGSGKS) coordinates ATP.

Belongs to the thymidylate kinase family.

The catalysed reaction is dTMP + ATP = dTDP + ADP. This chain is Probable thymidylate kinase, found in Natronomonas pharaonis (strain ATCC 35678 / DSM 2160 / CIP 103997 / JCM 8858 / NBRC 14720 / NCIMB 2260 / Gabara) (Halobacterium pharaonis).